A 550-amino-acid polypeptide reads, in one-letter code: Hydroxylamine reductase (550 aa).

[2Fe-2S] cluster-binding residues include Cys3, Cys6, Cys18, and Cys25. Residues His249, Glu273, Cys317, Cys405, Cys433, Cys458, Glu492, and Lys494 each contribute to the hybrid [4Fe-2O-2S] cluster site. Cys405 carries the cysteine persulfide modification.

The protein belongs to the HCP family. Requires [2Fe-2S] cluster as cofactor. Hybrid [4Fe-2O-2S] cluster serves as cofactor.

It is found in the cytoplasm. It carries out the reaction A + NH4(+) + H2O = hydroxylamine + AH2 + H(+). Functionally, catalyzes the reduction of hydroxylamine to form NH(3) and H(2)O. The protein is Hydroxylamine reductase of Salmonella schwarzengrund (strain CVM19633).